The chain runs to 178 residues: Large ribosomal subunit protein uL6 (178 aa).

Belongs to the universal ribosomal protein uL6 family. As to quaternary structure, part of the 50S ribosomal subunit.

Functionally, this protein binds to the 23S rRNA, and is important in its secondary structure. It is located near the subunit interface in the base of the L7/L12 stalk, and near the tRNA binding site of the peptidyltransferase center. This Streptococcus thermophilus (strain CNRZ 1066) protein is Large ribosomal subunit protein uL6.